The primary structure comprises 348 residues: Ferredoxin--NADP reductase 1 (348 aa).

Residues glutamate 36, lysine 44, tyrosine 48, isoleucine 88, proline 123, aspartate 285, and serine 326 each coordinate FAD. A disordered region spans residues 329 to 348 (EKFKKKNEQLKQEKQAQLMN).

Belongs to the ferredoxin--NADP reductase type 2 family. In terms of assembly, homodimer. FAD is required as a cofactor.

It catalyses the reaction 2 reduced [2Fe-2S]-[ferredoxin] + NADP(+) + H(+) = 2 oxidized [2Fe-2S]-[ferredoxin] + NADPH. The polypeptide is Ferredoxin--NADP reductase 1 (Shouchella clausii (strain KSM-K16) (Alkalihalobacillus clausii)).